A 491-amino-acid polypeptide reads, in one-letter code: Glutamate--tRNA ligase (491 aa).

Residues 13–23 (PSPTGFLHIGN) carry the 'HIGH' region motif. Positions 110, 112, 137, and 139 each coordinate Zn(2+). The short motif at 254-258 (KLSKR) is the 'KMSKS' region element. Position 257 (lysine 257) interacts with ATP.

Belongs to the class-I aminoacyl-tRNA synthetase family. Glutamate--tRNA ligase type 1 subfamily. In terms of assembly, monomer. It depends on Zn(2+) as a cofactor.

The protein localises to the cytoplasm. It carries out the reaction tRNA(Glu) + L-glutamate + ATP = L-glutamyl-tRNA(Glu) + AMP + diphosphate. Its function is as follows. Catalyzes the attachment of glutamate to tRNA(Glu) in a two-step reaction: glutamate is first activated by ATP to form Glu-AMP and then transferred to the acceptor end of tRNA(Glu). In Listeria innocua serovar 6a (strain ATCC BAA-680 / CLIP 11262), this protein is Glutamate--tRNA ligase.